The primary structure comprises 589 residues: ATP-dependent lipid A-core flippase (589 aa).

5 helical membrane passes run 29 to 49, 68 to 88, 157 to 177, 254 to 274, and 283 to 303; these read WLLVVAACGALLEAVAGSTFL, ALWLPLGIVGLFLLRGIAGYI, VIGALVVMLWYSWTVTLAILL, LSSAAVQLLGAVGLAMLLLIA, and LSPGDFVSLMTSMIAVIPALK. In terms of domain architecture, ABC transmembrane type-1 spans 32-314; sequence VVAACGALLE…LTNVQNMLQS (283 aa). Positions 346–582 constitute an ABC transporter domain; sequence IEFRGITARY…DGLYAYLYSM (237 aa). 380-387 lines the ATP pocket; that stretch reads GRSGSGKS.

It belongs to the ABC transporter superfamily. Lipid exporter (TC 3.A.1.106) family. In terms of assembly, homodimer.

Its subcellular location is the cell inner membrane. The enzyme catalyses ATP + H2O + lipid A-core oligosaccharideSide 1 = ADP + phosphate + lipid A-core oligosaccharideSide 2.. Its function is as follows. Involved in lipopolysaccharide (LPS) biosynthesis. Translocates lipid A-core from the inner to the outer leaflet of the inner membrane. Transmembrane domains (TMD) form a pore in the inner membrane and the ATP-binding domain (NBD) is responsible for energy generation. This is ATP-dependent lipid A-core flippase from Xylella fastidiosa (strain 9a5c).